Reading from the N-terminus, the 396-residue chain is Elongation factor Tu (396 aa).

The tr-type G domain occupies 10-205 (KTHANIGTIG…AVDDYIPTPE (196 aa)). A G1 region spans residues 19 to 26 (GHVDHGKT). 19–26 (GHVDHGKT) lines the GTP pocket. Thr-26 is a Mg(2+) binding site. Residues 61 to 65 (GITIS) are G2. Positions 82 to 85 (DCPG) are G3. GTP-binding positions include 82-86 (DCPGH) and 137-140 (NKCD). The segment at 137–140 (NKCD) is G4. A G5 region spans residues 175-177 (SAL).

This sequence belongs to the TRAFAC class translation factor GTPase superfamily. Classic translation factor GTPase family. EF-Tu/EF-1A subfamily. In terms of assembly, monomer.

It localises to the cytoplasm. It carries out the reaction GTP + H2O = GDP + phosphate + H(+). Functionally, GTP hydrolase that promotes the GTP-dependent binding of aminoacyl-tRNA to the A-site of ribosomes during protein biosynthesis. The protein is Elongation factor Tu of Halalkalibacterium halodurans (strain ATCC BAA-125 / DSM 18197 / FERM 7344 / JCM 9153 / C-125) (Bacillus halodurans).